A 167-amino-acid chain; its full sequence is Probable phospholipid hydroperoxide glutathione peroxidase (167 aa).

C41 is an active-site residue.

Belongs to the glutathione peroxidase family.

The protein resides in the cytoplasm. The enzyme catalyses a hydroperoxy polyunsaturated fatty acid + 2 glutathione = a hydroxy polyunsaturated fatty acid + glutathione disulfide + H2O. Its function is as follows. Protects cells and enzymes from oxidative damage, by catalyzing the reduction of hydrogen peroxide, lipid peroxides and organic hydroperoxide, by glutathione. This chain is Probable phospholipid hydroperoxide glutathione peroxidase (CSA), found in Citrus sinensis (Sweet orange).